Reading from the N-terminus, the 809-residue chain is Phenylalanine--tRNA ligase beta subunit (809 aa).

In terms of domain architecture, tRNA-binding spans 39 to 154; it reads APPTSKIVVG…EDTPVGQDIR (116 aa). The region spanning 405 to 480 is the B5 domain; it reads PQRAPVKMRV…RIYGFEKIPA (76 aa). Positions 458, 464, 467, and 468 each coordinate Mg(2+). The FDX-ACB domain occupies 707 to 808; it reads SKFPPVRRDI…RMARAGARLR (102 aa).

The protein belongs to the phenylalanyl-tRNA synthetase beta subunit family. Type 1 subfamily. Tetramer of two alpha and two beta subunits. Mg(2+) serves as cofactor.

Its subcellular location is the cytoplasm. It catalyses the reaction tRNA(Phe) + L-phenylalanine + ATP = L-phenylalanyl-tRNA(Phe) + AMP + diphosphate + H(+). This chain is Phenylalanine--tRNA ligase beta subunit, found in Burkholderia lata (strain ATCC 17760 / DSM 23089 / LMG 22485 / NCIMB 9086 / R18194 / 383).